We begin with the raw amino-acid sequence, 199 residues long: FMN-dependent NADH:quinone oxidoreductase (199 aa).

Residue 17-19 (SYS) coordinates FMN.

It belongs to the azoreductase type 1 family. In terms of assembly, homodimer. FMN is required as a cofactor.

It carries out the reaction 2 a quinone + NADH + H(+) = 2 a 1,4-benzosemiquinone + NAD(+). The catalysed reaction is N,N-dimethyl-1,4-phenylenediamine + anthranilate + 2 NAD(+) = 2-(4-dimethylaminophenyl)diazenylbenzoate + 2 NADH + 2 H(+). Functionally, quinone reductase that provides resistance to thiol-specific stress caused by electrophilic quinones. In terms of biological role, also exhibits azoreductase activity. Catalyzes the reductive cleavage of the azo bond in aromatic azo compounds to the corresponding amines. The polypeptide is FMN-dependent NADH:quinone oxidoreductase (Mycoplasmopsis synoviae (strain 53) (Mycoplasma synoviae)).